The primary structure comprises 512 residues: ADP,ATP carrier protein 4 (512 aa).

12 helical membrane passes run 34–54 (ISKF…QNLI), 71–91 (ISFL…VMYV), 102–122 (IFYL…YVIF), 157–177 (FSLF…LLFW), 192–212 (FYPL…HFLE), 231–251 (FHTL…IVSI), 296–316 (LIAT…GPWK), 330–350 (AAFI…FVLL), 361–381 (FTSA…FFAF), 390–410 (LIIA…IGAI), 448–468 (VIGT…IFII), and 476–496 (SISI…IWAT).

Belongs to the ADP/ATP translocase tlc family.

It localises to the cell membrane. Functionally, provides the rickettsial cell with host ATP in exchange for rickettsial ADP. This is an obligate exchange system. This energy acquiring activity is an important component of rickettsial parasitism. This Rickettsia typhi (strain ATCC VR-144 / Wilmington) protein is ADP,ATP carrier protein 4 (tlcD).